Here is a 69-residue protein sequence, read N- to C-terminus: uncharacterized protein (69 aa).

This is an uncharacterized protein from Bacillus subtilis (strain 168).